Here is a 434-residue protein sequence, read N- to C-terminus: Histidinol dehydrogenase (434 aa).

The substrate site is built by Ser-242, Gln-264, and His-267. Zn(2+) is bound by residues Gln-264 and His-267. Catalysis depends on proton acceptor residues Glu-332 and His-333. Residues His-333, Asp-366, Glu-420, and His-425 each contribute to the substrate site. Asp-366 lines the Zn(2+) pocket. His-425 lines the Zn(2+) pocket.

It belongs to the histidinol dehydrogenase family. Requires Zn(2+) as cofactor.

The catalysed reaction is L-histidinol + 2 NAD(+) + H2O = L-histidine + 2 NADH + 3 H(+). The protein operates within amino-acid biosynthesis; L-histidine biosynthesis; L-histidine from 5-phospho-alpha-D-ribose 1-diphosphate: step 9/9. Functionally, catalyzes the sequential NAD-dependent oxidations of L-histidinol to L-histidinaldehyde and then to L-histidine. This is Histidinol dehydrogenase from Oleidesulfovibrio alaskensis (strain ATCC BAA-1058 / DSM 17464 / G20) (Desulfovibrio alaskensis).